Consider the following 492-residue polypeptide: Protein adenylyltransferase Fic (492 aa).

Low complexity predominate over residues methionine 1–glutamine 17. A disordered region spans residues methionine 1 to proline 21. A helical membrane pass occupies residues leucine 33 to serine 55. TPR repeat units follow at residues alanine 118 to histidine 151 and proline 152 to asparagine 186. An Inhibitory (S/T)XXXE(G/N) motif motif is present at residues serine 243–glycine 248. Residues glutamate 247 and valine 328–histidine 331 contribute to the ATP site. A Fido domain is found at isoleucine 297–aspartate 432. Histidine 375 is a catalytic residue. Residues aspartate 379–arginine 386, tyrosine 411–tyrosine 412, and asparagine 419 contribute to the ATP site.

It belongs to the fic family. In terms of assembly, homodimer.

It localises to the membrane. It carries out the reaction L-tyrosyl-[protein] + ATP = O-(5'-adenylyl)-L-tyrosyl-[protein] + diphosphate. The enzyme catalyses L-threonyl-[protein] + ATP = 3-O-(5'-adenylyl)-L-threonyl-[protein] + diphosphate. The catalysed reaction is 3-O-(5'-adenylyl)-L-threonyl-[protein] + H2O = L-threonyl-[protein] + AMP + H(+). Its activity is regulated as follows. The side chain of Glu-247 determines which of the two opposing activities (AMPylase or de-AMPylase) will take place. In response to endoplasmic reticulum stress, mediates de-AMPylase activity. Adenylyltransferase activity is inhibited by the inhibitory helix present at the N-terminus: Glu-247 binds ATP and competes with ATP-binding at Arg-386, thereby preventing adenylyltransferase activity. In unstressed cells, disengagement of Glu-247 promotes adenylyltransferase activity. Activation dissociates ATP-binding from Glu-247, allowing ordered binding of the entire ATP moiety with the alpha-phosphate in an orientation that is productive for accepting an incoming target hydroxyl side chain. In terms of biological role, protein that can both mediate the addition of adenosine 5'-monophosphate (AMP) to specific residues of target proteins (AMPylation), and the removal of the same modification from target proteins (de-AMPylation), depending on the context. The side chain of Glu-247 determines which of the two opposing activities (AMPylase or de-AMPylase) will take place. Acts as a key regulator of the unfolded protein response (UPR) by mediating AMPylation or de-AMPylation of Hsc70-3/BiP. In unstressed cells, acts as an adenylyltransferase by mediating AMPylation of Hsc70-3/BiP at 'Thr-518', thereby inactivating it. In response to endoplasmic reticulum stress, acts as a phosphodiesterase by mediating removal of ATP (de-AMPylation) from Hsc70-3/BiP at 'Thr-518', leading to restore HSPA5/BiP activity. This is Protein adenylyltransferase Fic from Drosophila simulans (Fruit fly).